We begin with the raw amino-acid sequence, 198 residues long: Threonylcarbamoyl-AMP synthase (198 aa).

In terms of domain architecture, YrdC-like spans 15-198; it reads LLKIYHIIKL…AISGQLIRRG (184 aa).

The protein belongs to the SUA5 family. TsaC subfamily.

Its subcellular location is the cytoplasm. It carries out the reaction L-threonine + hydrogencarbonate + ATP = L-threonylcarbamoyladenylate + diphosphate + H2O. Functionally, required for the formation of a threonylcarbamoyl group on adenosine at position 37 (t(6)A37) in tRNAs that read codons beginning with adenine. Catalyzes the conversion of L-threonine, HCO(3)(-)/CO(2) and ATP to give threonylcarbamoyl-AMP (TC-AMP) as the acyladenylate intermediate, with the release of diphosphate. In Baumannia cicadellinicola subsp. Homalodisca coagulata, this protein is Threonylcarbamoyl-AMP synthase.